The chain runs to 204 residues: ATP synthase subunit b 2 (204 aa).

The helical transmembrane segment at Ile-50–Pro-70 threads the bilayer.

This sequence belongs to the ATPase B chain family. In terms of assembly, F-type ATPases have 2 components, F(1) - the catalytic core - and F(0) - the membrane proton channel. F(1) has five subunits: alpha(3), beta(3), gamma(1), delta(1), epsilon(1). F(0) has three main subunits: a(1), b(2) and c(10-14). The alpha and beta chains form an alternating ring which encloses part of the gamma chain. F(1) is attached to F(0) by a central stalk formed by the gamma and epsilon chains, while a peripheral stalk is formed by the delta and b chains.

It localises to the cell inner membrane. Its function is as follows. F(1)F(0) ATP synthase produces ATP from ADP in the presence of a proton or sodium gradient. F-type ATPases consist of two structural domains, F(1) containing the extramembraneous catalytic core and F(0) containing the membrane proton channel, linked together by a central stalk and a peripheral stalk. During catalysis, ATP synthesis in the catalytic domain of F(1) is coupled via a rotary mechanism of the central stalk subunits to proton translocation. Functionally, component of the F(0) channel, it forms part of the peripheral stalk, linking F(1) to F(0). The b'-subunit is a diverged and duplicated form of b found in plants and photosynthetic bacteria. In Rhodospirillum centenum (strain ATCC 51521 / SW), this protein is ATP synthase subunit b 2 (atpF2).